The primary structure comprises 416 residues: Homeobox protein ceh-62 (416 aa).

Positions 103–113 are enriched in low complexity; sequence TPTPIIATPSI. 2 disordered regions span residues 103–144 and 178–247; these read TPTP…QATR and FQNR…FPPT. The segment covering 118–127 has biased composition (polar residues); sequence QPLQSPSAPN. A DNA-binding region (homeobox) is located at residues 130 to 189; sequence SRRKRTTFSPEQATRLEAEYIGDSYMAREKRHLLAQSLKLSENQVKTWFQNRRAKDKRDR. The segment covering 193–218 has biased composition (low complexity); it reads NASNHTSNSRRSSPSRKSSSDSTPTP. The segment covering 219-240 has biased composition (polar residues); sequence TQATQFDMPTQIQTASPPTTAD.

It is found in the nucleus. This is Homeobox protein ceh-62 from Caenorhabditis elegans.